The following is a 230-amino-acid chain: Uracil-DNA glycosylase (230 aa).

D70 (proton acceptor) is an active-site residue.

This sequence belongs to the uracil-DNA glycosylase (UDG) superfamily. UNG family.

The protein localises to the cytoplasm. The catalysed reaction is Hydrolyzes single-stranded DNA or mismatched double-stranded DNA and polynucleotides, releasing free uracil.. In terms of biological role, excises uracil residues from the DNA which can arise as a result of misincorporation of dUMP residues by DNA polymerase or due to deamination of cytosine. The protein is Uracil-DNA glycosylase of Pseudomonas syringae pv. tomato (strain ATCC BAA-871 / DC3000).